A 332-amino-acid chain; its full sequence is 2,3-diketo-L-gulonate reductase (332 aa).

The active-site Proton donor is the histidine 44. NAD(+)-binding positions include 168 to 174, 224 to 225, and 304 to 306; these read ITMIDMS, WK, and GHE.

The protein belongs to the LDH2/MDH2 oxidoreductase family. DlgD subfamily. As to quaternary structure, homodimer.

It is found in the cytoplasm. The catalysed reaction is 3-dehydro-L-gulonate + NAD(+) = 2,3-dioxo-L-gulonate + NADH + H(+). The enzyme catalyses 3-dehydro-L-gulonate + NADP(+) = 2,3-dioxo-L-gulonate + NADPH + H(+). Its function is as follows. Catalyzes the reduction of 2,3-diketo-L-gulonate in the presence of NADH, to form 3-keto-L-gulonate. The chain is 2,3-diketo-L-gulonate reductase from Citrobacter koseri (strain ATCC BAA-895 / CDC 4225-83 / SGSC4696).